We begin with the raw amino-acid sequence, 180 residues long: Protein SPMIP9 (180 aa).

In terms of assembly, microtubule inner protein component of sperm flagellar doublet microtubules. In terms of tissue distribution, testis-specific. Detected in the germ cell lineage at all stages.

It is found in the nucleus. The protein localises to the cytoplasm. Its subcellular location is the cytoskeleton. The protein resides in the flagellum axoneme. Functionally, microtubule inner protein (MIP) part of the dynein-decorated doublet microtubules (DMTs) in flagella axoneme. The sequence is that of Protein SPMIP9 from Homo sapiens (Human).